A 291-amino-acid polypeptide reads, in one-letter code: Neugrin (291 aa).

The first 15 residues, 1-15 (MAVTLSLLLGGRVCA), serve as a signal peptide directing secretion. 2 disordered regions span residues 26-48 (GVAGPGPIGREPDPDSDWEPEER) and 155-270 (GSGN…DNFS). Serine 41 is subject to Phosphoserine. Residues asparagine 158 and asparagine 186 are each glycosylated (N-linked (GlcNAc...) asparagine). Polar residues predominate over residues 236 to 246 (KYSSDSESPRG). The N-linked (GlcNAc...) asparagine glycan is linked to asparagine 268.

This sequence belongs to the neugrin family. Forms a regulatory protein-RNA complex, consisting of RCC1L, NGRN, RPUSD3, RPUSD4, TRUB2, FASTKD2 and 16S mt-rRNA. Interacts with 16S mt-rRNA; this interaction is direct. As to expression, expressed at high levels in heart, brain and skeletal muscle. In brain, mainly expressed in neurons rather than glial cells.

It localises to the nucleus. It is found in the secreted. Its subcellular location is the mitochondrion membrane. Plays an essential role in mitochondrial ribosome biogenesis. As a component of a functional protein-RNA module, consisting of RCC1L, NGRN, RPUSD3, RPUSD4, TRUB2, FASTKD2 and 16S mitochondrial ribosomal RNA (16S mt-rRNA), controls 16S mt-rRNA abundance and is required for intra-mitochondrial translation of core subunits of the oxidative phosphorylation system. This Homo sapiens (Human) protein is Neugrin.